Consider the following 622-residue polypeptide: Probable potassium transport system protein Kup (622 aa).

The next 12 helical transmembrane spans lie at 8–28 (LAVLTVGAIGVVYGDIGTSVL), 50–70 (ILSIFFWTLTVIVSLKYVSLV), 101–121 (VLLLVGIFGTSLFYGDGVITP), 137–157 (PTFTKAVIPTTLVILFGLFAM), 165–185 (IGKFFGPITIVWFAVLALLGV), 213–233 (ITFIILGAVVLCVTGAEALYA), 247–267 (WFSVVMPSLVLNYFGQGALLL), 285–305 (ALIPLVVLATLATVIASQALI), 337–357 (IYMPFVNWGLFVTIVLAVVMF), 366–386 (AYGIAVCTDMLITTILTFYVI), 393–413 (PLALCIAATSVFFLVDFAFFA), and 419–439 (LFAGGWFPLVIGGAVFTLMIT).

Belongs to the HAK/KUP transporter (TC 2.A.72) family.

It localises to the cell inner membrane. It carries out the reaction K(+)(in) + H(+)(in) = K(+)(out) + H(+)(out). Functionally, transport of potassium into the cell. Likely operates as a K(+):H(+) symporter. The chain is Probable potassium transport system protein Kup from Polaromonas naphthalenivorans (strain CJ2).